Consider the following 303-residue polypeptide: MTRHFLDLSAMTATDLRTIIDDARVRKSATKAGTAEKPLAGKMLAMIFEKPSTRTRVSFDVGMRQLGGETLFLSGTEMQLGRAETIGDTAKVLSRYVDAIMIRTTDHRRLLEMAEHATVPVINGLTDDTHPCQIMADILTFEEHRGPVKGKTIAWTGDGNNVLHSLIEGSARFGYRMNMAVPLGSEPHDKFLNWARNNGAEVLLSHEAEQAVAGAHCVVTDTWISMNQEHRARGHNVFQPYQVNGALMKHAAPDALFMHCLPAHRGEEVTDEVIDGPQSVVFDEAENRLHAQKSILAWCMGAV.

Residues S52 to T55, Q79, R103, and H130 to Q133 each bind carbamoyl phosphate. L-ornithine-binding positions include N161, D221, and S225–M226. Residues C260–L261 and R288 contribute to the carbamoyl phosphate site.

Belongs to the aspartate/ornithine carbamoyltransferase superfamily. OTCase family.

It is found in the cytoplasm. The enzyme catalyses carbamoyl phosphate + L-ornithine = L-citrulline + phosphate + H(+). Its pathway is amino-acid biosynthesis; L-arginine biosynthesis; L-arginine from L-ornithine and carbamoyl phosphate: step 1/3. Reversibly catalyzes the transfer of the carbamoyl group from carbamoyl phosphate (CP) to the N(epsilon) atom of ornithine (ORN) to produce L-citrulline. The sequence is that of Ornithine carbamoyltransferase (argF) from Rhizobium meliloti (strain 1021) (Ensifer meliloti).